The sequence spans 385 residues: FK506-binding protein 5 (385 aa).

Positions 26–115 (TNFVSVHYDA…RFEVELIGFW (90 aa)) constitute a PPIase FKBP-type domain. TPR repeat units follow at residues 128-161 (AEKKKNEGNALFKLDAIESALFAYRKGREYIQDL), 177-210 (VSIQLNIGACHLKLKHYDHAIEVCQKALDRDMTK), and 211-244 (IKAYYRIGQAYMEKGDYESSLTFIRIGLETAIGL).

It catalyses the reaction [protein]-peptidylproline (omega=180) = [protein]-peptidylproline (omega=0). With respect to regulation, inhibited by both FK506 and rapamycin. In terms of biological role, PPIases accelerate the folding of proteins. It catalyzes the cis-trans isomerization of proline imidic peptide bonds in oligopeptides. The chain is FK506-binding protein 5 (FKBP5) from Rhizopus delemar (strain RA 99-880 / ATCC MYA-4621 / FGSC 9543 / NRRL 43880) (Mucormycosis agent).